A 131-amino-acid chain; its full sequence is Large ribosomal subunit protein uL22 (131 aa).

Belongs to the universal ribosomal protein uL22 family. As to quaternary structure, part of the 50S ribosomal subunit.

In terms of biological role, this protein binds specifically to 23S rRNA; its binding is stimulated by other ribosomal proteins, e.g. L4, L17, and L20. It is important during the early stages of 50S assembly. It makes multiple contacts with different domains of the 23S rRNA in the assembled 50S subunit and ribosome. Its function is as follows. The globular domain of the protein is located near the polypeptide exit tunnel on the outside of the subunit, while an extended beta-hairpin is found that lines the wall of the exit tunnel in the center of the 70S ribosome. In Phytoplasma mali (strain AT), this protein is Large ribosomal subunit protein uL22.